The sequence spans 360 residues: MRLTRIKAGNFRNFQHLDVQPAAGLNIVRGRNAQGKTNFIEAVFFALRGHSFRSLRDRELVTWGQESAFVEAELEGKDGRTRVRAELNPAGKKIVWAGEPVGKAELAVRLGTVLFTPDDLSLIKGGPRERRRFLDLELGIFVPGYLTALQLYRRALEQRNHLLRMGGGRRYSELLDLWTDEVCKYGMMLLSGRLEILKEFAPLACRLFGAWAGEELAVRYRSSVGLSNGVRTPGAGDLRETLAAVRQDEIRAGQTQAGPHLDDLAFMVNGKEGRPFASQGQQRSVVLALKLAQVFLWKRHTGEAPVVLLDDLLFEFDRERRDKVLETLQNDVQVFITTGERVLSGSRVFCVHSGNIQEES.

30 to 37 (GRNAQGKT) lines the ATP pocket.

It belongs to the RecF family.

It localises to the cytoplasm. In terms of biological role, the RecF protein is involved in DNA metabolism; it is required for DNA replication and normal SOS inducibility. RecF binds preferentially to single-stranded, linear DNA. It also seems to bind ATP. In Desulforudis audaxviator (strain MP104C), this protein is DNA replication and repair protein RecF.